A 181-amino-acid chain; its full sequence is Ribosome-recycling factor (181 aa).

The interval 131–154 (RRDAMDSVKKEKEMPEDDVRKAEN) is disordered.

This sequence belongs to the RRF family.

The protein resides in the cytoplasm. Functionally, responsible for the release of ribosomes from messenger RNA at the termination of protein biosynthesis. May increase the efficiency of translation by recycling ribosomes from one round of translation to another. This is Ribosome-recycling factor from Leuconostoc citreum (strain KM20).